Reading from the N-terminus, the 458-residue chain is UDP-N-acetylmuramoylalanine--D-glutamate ligase (458 aa).

119-125 (GSNGKTT) serves as a coordination point for ATP.

This sequence belongs to the MurCDEF family.

It localises to the cytoplasm. The catalysed reaction is UDP-N-acetyl-alpha-D-muramoyl-L-alanine + D-glutamate + ATP = UDP-N-acetyl-alpha-D-muramoyl-L-alanyl-D-glutamate + ADP + phosphate + H(+). Its pathway is cell wall biogenesis; peptidoglycan biosynthesis. Cell wall formation. Catalyzes the addition of glutamate to the nucleotide precursor UDP-N-acetylmuramoyl-L-alanine (UMA). The sequence is that of UDP-N-acetylmuramoylalanine--D-glutamate ligase from Limosilactobacillus fermentum (strain NBRC 3956 / LMG 18251) (Lactobacillus fermentum).